We begin with the raw amino-acid sequence, 188 residues long: Adenine phosphoribosyltransferase (188 aa).

This sequence belongs to the purine/pyrimidine phosphoribosyltransferase family. In terms of assembly, homodimer.

The protein resides in the cytoplasm. The catalysed reaction is AMP + diphosphate = 5-phospho-alpha-D-ribose 1-diphosphate + adenine. Its pathway is purine metabolism; AMP biosynthesis via salvage pathway; AMP from adenine: step 1/1. Functionally, catalyzes a salvage reaction resulting in the formation of AMP, that is energically less costly than de novo synthesis. The chain is Adenine phosphoribosyltransferase from Burkholderia multivorans (strain ATCC 17616 / 249).